Reading from the N-terminus, the 210-residue chain is Large ribosomal subunit protein uL3 (210 aa).

Residues 131–165 (GPMSHGSKYHRRVGSMGATTDPGRTFKGKKMPGRM) are disordered.

Belongs to the universal ribosomal protein uL3 family. As to quaternary structure, part of the 50S ribosomal subunit. Forms a cluster with proteins L14 and L19.

In terms of biological role, one of the primary rRNA binding proteins, it binds directly near the 3'-end of the 23S rRNA, where it nucleates assembly of the 50S subunit. This Caldanaerobacter subterraneus subsp. tengcongensis (strain DSM 15242 / JCM 11007 / NBRC 100824 / MB4) (Thermoanaerobacter tengcongensis) protein is Large ribosomal subunit protein uL3.